A 1060-amino-acid chain; its full sequence is Carbamoyl phosphate synthase large chain (1060 aa).

Residues 1–401 form a carboxyphosphate synthetic domain region; the sequence is MPKRTDIRKI…SLLKACRSLE (401 aa). 12 residues coordinate ATP: R129, R169, G175, G176, R208, I210, E215, G241, I242, H243, Q284, and E298. Residues 133–327 form the ATP-grasp 1 domain; it reads KQLMEELNQP…IAKLAAKIAV (195 aa). Mg(2+)-binding residues include Q284, E298, and N300. The Mn(2+) site is built by Q284, E298, and N300. Positions 402–546 are oligomerization domain; that stretch reads IGVDHIKIAD…YSTYAVENES (145 aa). The tract at residues 547 to 929 is carbamoyl phosphate synthetic domain; the sequence is LISDKASILV…ALYKAFEAAY (383 aa). Residues 671–861 form the ATP-grasp 2 domain; the sequence is EATLQALNIP…MAQVATKVIL (191 aa). Positions 707, 746, 748, 752, 777, 778, 779, 780, 820, and 832 each coordinate ATP. Mg(2+) is bound by residues Q820, E832, and N834. Mn(2+) is bound by residues Q820, E832, and N834. The region spanning 930–1060 is the MGS-like domain; that stretch reads LHMPDYGNIV…SRAFTLKVLD (131 aa). The allosteric domain stretch occupies residues 930 to 1060; it reads LHMPDYGNIV…SRAFTLKVLD (131 aa).

It belongs to the CarB family. In terms of assembly, composed of two chains; the small (or glutamine) chain promotes the hydrolysis of glutamine to ammonia, which is used by the large (or ammonia) chain to synthesize carbamoyl phosphate. Tetramer of heterodimers (alpha,beta)4. Mg(2+) serves as cofactor. Mn(2+) is required as a cofactor.

It carries out the reaction hydrogencarbonate + L-glutamine + 2 ATP + H2O = carbamoyl phosphate + L-glutamate + 2 ADP + phosphate + 2 H(+). It catalyses the reaction hydrogencarbonate + NH4(+) + 2 ATP = carbamoyl phosphate + 2 ADP + phosphate + 2 H(+). It participates in amino-acid biosynthesis; L-arginine biosynthesis; carbamoyl phosphate from bicarbonate: step 1/1. Its pathway is pyrimidine metabolism; UMP biosynthesis via de novo pathway; (S)-dihydroorotate from bicarbonate: step 1/3. Large subunit of the glutamine-dependent carbamoyl phosphate synthetase (CPSase). CPSase catalyzes the formation of carbamoyl phosphate from the ammonia moiety of glutamine, carbonate, and phosphate donated by ATP, constituting the first step of 2 biosynthetic pathways, one leading to arginine and/or urea and the other to pyrimidine nucleotides. The large subunit (synthetase) binds the substrates ammonia (free or transferred from glutamine from the small subunit), hydrogencarbonate and ATP and carries out an ATP-coupled ligase reaction, activating hydrogencarbonate by forming carboxy phosphate which reacts with ammonia to form carbamoyl phosphate. This Streptococcus agalactiae serotype V (strain ATCC BAA-611 / 2603 V/R) protein is Carbamoyl phosphate synthase large chain.